Consider the following 429-residue polypeptide: Serine hydroxymethyltransferase (429 aa).

(6S)-5,6,7,8-tetrahydrofolate is bound by residues Leu-126 and 130 to 132 (GHL). Lys-235 bears the N6-(pyridoxal phosphate)lysine mark. 359 to 361 (SPF) provides a ligand contact to (6S)-5,6,7,8-tetrahydrofolate.

It belongs to the SHMT family. In terms of assembly, homodimer. The cofactor is pyridoxal 5'-phosphate.

The protein resides in the cytoplasm. The enzyme catalyses (6R)-5,10-methylene-5,6,7,8-tetrahydrofolate + glycine + H2O = (6S)-5,6,7,8-tetrahydrofolate + L-serine. Its pathway is one-carbon metabolism; tetrahydrofolate interconversion. It participates in amino-acid biosynthesis; glycine biosynthesis; glycine from L-serine: step 1/1. In terms of biological role, catalyzes the reversible interconversion of serine and glycine with tetrahydrofolate (THF) serving as the one-carbon carrier. This reaction serves as the major source of one-carbon groups required for the biosynthesis of purines, thymidylate, methionine, and other important biomolecules. Also exhibits THF-independent aldolase activity toward beta-hydroxyamino acids, producing glycine and aldehydes, via a retro-aldol mechanism. This is Serine hydroxymethyltransferase from Synechococcus sp. (strain CC9902).